A 366-amino-acid chain; its full sequence is tRNA-specific 2-thiouridylase MnmA (366 aa).

Residues 6–13 (AMSGGVDS) and L32 contribute to the ATP site. C101 (nucleophile) is an active-site residue. Residues C101 and C199 are joined by a disulfide bond. ATP is bound at residue G125. The interval 149-151 (KDQ) is interaction with tRNA. Catalysis depends on C199, which acts as the Cysteine persulfide intermediate.

Belongs to the MnmA/TRMU family.

It is found in the cytoplasm. The catalysed reaction is S-sulfanyl-L-cysteinyl-[protein] + uridine(34) in tRNA + AH2 + ATP = 2-thiouridine(34) in tRNA + L-cysteinyl-[protein] + A + AMP + diphosphate + H(+). Functionally, catalyzes the 2-thiolation of uridine at the wobble position (U34) of tRNA, leading to the formation of s(2)U34. The sequence is that of tRNA-specific 2-thiouridylase MnmA from Corynebacterium diphtheriae (strain ATCC 700971 / NCTC 13129 / Biotype gravis).